The primary structure comprises 294 residues: 33 kDa chaperonin (294 aa).

2 disulfides stabilise this stretch: cysteine 231/cysteine 233 and cysteine 264/cysteine 267.

This sequence belongs to the HSP33 family. Under oxidizing conditions two disulfide bonds are formed involving the reactive cysteines. Under reducing conditions zinc is bound to the reactive cysteines and the protein is inactive.

The protein resides in the cytoplasm. Its function is as follows. Redox regulated molecular chaperone. Protects both thermally unfolding and oxidatively damaged proteins from irreversible aggregation. Plays an important role in the bacterial defense system toward oxidative stress. In Aeromonas salmonicida (strain A449), this protein is 33 kDa chaperonin.